The following is a 175-amino-acid chain: Adenine phosphoribosyltransferase (175 aa).

The protein belongs to the purine/pyrimidine phosphoribosyltransferase family. In terms of assembly, homodimer.

Its subcellular location is the cytoplasm. It catalyses the reaction AMP + diphosphate = 5-phospho-alpha-D-ribose 1-diphosphate + adenine. Its pathway is purine metabolism; AMP biosynthesis via salvage pathway; AMP from adenine: step 1/1. In terms of biological role, catalyzes a salvage reaction resulting in the formation of AMP, that is energically less costly than de novo synthesis. The polypeptide is Adenine phosphoribosyltransferase (Synechococcus sp. (strain JA-3-3Ab) (Cyanobacteria bacterium Yellowstone A-Prime)).